A 214-amino-acid chain; its full sequence is Cell division protein SepF (214 aa).

Residues 24–120 (DNYEEYEERK…NTRRAQESTA (97 aa)) are disordered. Basic and acidic residues predominate over residues 30-40 (EERKAVNEPPR). The segment covering 55-67 (ESYSQPAYTQQSE) has biased composition (polar residues). The span at 69-98 (VVEKPSARYRSAEAHQERDTQQAAYTEKKV) shows a compositional bias: basic and acidic residues. Positions 101–120 (MRSSNQSATTNTRRAQESTA) are enriched in polar residues.

This sequence belongs to the SepF family. As to quaternary structure, homodimer. Interacts with FtsZ.

It is found in the cytoplasm. In terms of biological role, cell division protein that is part of the divisome complex and is recruited early to the Z-ring. Probably stimulates Z-ring formation, perhaps through the cross-linking of FtsZ protofilaments. Its function overlaps with FtsA. The protein is Cell division protein SepF of Enterococcus faecalis (strain ATCC 700802 / V583).